The sequence spans 691 residues: DNA ligase (691 aa).

NAD(+)-binding positions include 41–45 (DAEYD), 90–91 (SL), and Glu130. Catalysis depends on Lys132, which acts as the N6-AMP-lysine intermediate. Arg153, Glu190, Lys307, and Lys331 together coordinate NAD(+). The Zn(2+) site is built by Cys425, Cys428, Cys443, and Cys449. Positions 610–691 (APQGVLAGKT…LHQLLEGNTQ (82 aa)) constitute a BRCT domain.

This sequence belongs to the NAD-dependent DNA ligase family. LigA subfamily. Mg(2+) serves as cofactor. Requires Mn(2+) as cofactor.

The enzyme catalyses NAD(+) + (deoxyribonucleotide)n-3'-hydroxyl + 5'-phospho-(deoxyribonucleotide)m = (deoxyribonucleotide)n+m + AMP + beta-nicotinamide D-nucleotide.. DNA ligase that catalyzes the formation of phosphodiester linkages between 5'-phosphoryl and 3'-hydroxyl groups in double-stranded DNA using NAD as a coenzyme and as the energy source for the reaction. It is essential for DNA replication and repair of damaged DNA. The chain is DNA ligase from Burkholderia vietnamiensis (strain G4 / LMG 22486) (Burkholderia cepacia (strain R1808)).